Reading from the N-terminus, the 516-residue chain is Flavonoid-6-hydroxylase (516 aa).

The helical transmembrane segment at 3 to 23 (FNAAVCAALAFISLLSYYLIW) threads the bilayer. Heme is bound at residue cysteine 455.

The protein belongs to the cytochrome P450 family. It depends on heme as a cofactor.

It is found in the membrane. The catalysed reaction is genkwanin + reduced [NADPH--hemoprotein reductase] + O2 = scutellarein 7-methyl ether + oxidized [NADPH--hemoprotein reductase] + H2O. It carries out the reaction (2S)-sakuranetin + reduced [NADPH--hemoprotein reductase] + O2 = (2S)-7-methylcarthamidin + oxidized [NADPH--hemoprotein reductase] + H2O + H(+). The enzyme catalyses apigenin 4',7-dimethyl ether + reduced [NADPH--hemoprotein reductase] + O2 = ladanein + oxidized [NADPH--hemoprotein reductase] + H2O + H(+). It catalyses the reaction (2S)-naringenin 4',7-dimethyl ether + reduced [NADPH--hemoprotein reductase] + O2 = (2S)-carthamidin-4',7-dimethyl ether + oxidized [NADPH--hemoprotein reductase] + H2O + H(+). The protein operates within flavonoid metabolism. Its function is as follows. 6-OH hydroxylase involved in the biosynthesis of polymethoxylated flavonoids natural products such as pebrellin, aroma compounds which contribute to the flavor of peppermint, and exhibit pharmacological activities such as anti-allergic, anti-oxidant, antibacterial, anti-proliferative, and anti-inflammatory effects. Catalyzes the 6-hydroxylation of 7-O-methylated precursors such as the conversion of genkwanin (GENK) to scutellarein-7-methyl ether (SCU7Me). Can also use apigenin-7,4'-dimethyl ether (AdM), naringenin-7-methyl ether (SAK) and naringenin-7,4'-dimethyl ether (NdM) as substrates. This is Flavonoid-6-hydroxylase from Mentha piperita (Peppermint).